The primary structure comprises 285 residues: NADPH-dependent 7-cyano-7-deazaguanine reductase (285 aa).

91-93 (IES) serves as a coordination point for substrate. 93–94 (SK) contacts NADPH. Cys-193 (thioimide intermediate) is an active-site residue. The active-site Proton donor is Asp-200. 232–233 (HE) serves as a coordination point for substrate. 261–262 (RG) contacts NADPH.

It belongs to the GTP cyclohydrolase I family. QueF type 2 subfamily. As to quaternary structure, homodimer.

It localises to the cytoplasm. It catalyses the reaction 7-aminomethyl-7-carbaguanine + 2 NADP(+) = 7-cyano-7-deazaguanine + 2 NADPH + 3 H(+). It functions in the pathway tRNA modification; tRNA-queuosine biosynthesis. In terms of biological role, catalyzes the NADPH-dependent reduction of 7-cyano-7-deazaguanine (preQ0) to 7-aminomethyl-7-deazaguanine (preQ1). This Shewanella frigidimarina (strain NCIMB 400) protein is NADPH-dependent 7-cyano-7-deazaguanine reductase.